Here is a 155-residue protein sequence, read N- to C-terminus: Small ribosomal subunit protein uS7cz/uS7cy (155 aa).

The protein belongs to the universal ribosomal protein uS7 family. In terms of assembly, part of the 30S ribosomal subunit.

The protein resides in the plastid. Its subcellular location is the chloroplast. Functionally, one of the primary rRNA binding proteins, it binds directly to 16S rRNA where it nucleates assembly of the head domain of the 30S subunit. This is Small ribosomal subunit protein uS7cz/uS7cy (rps7-A) from Lemna minor (Common duckweed).